The sequence spans 246 residues: Pyridoxine 5'-phosphate synthase (246 aa).

3-amino-2-oxopropyl phosphate is bound at residue Asn-9. 1-deoxy-D-xylulose 5-phosphate is bound at residue 11 to 12; the sequence is DH. Arg-20 contributes to the 3-amino-2-oxopropyl phosphate binding site. His-45 (proton acceptor) is an active-site residue. Positions 47 and 52 each coordinate 1-deoxy-D-xylulose 5-phosphate. Glu-72 functions as the Proton acceptor in the catalytic mechanism. Thr-102 is a 1-deoxy-D-xylulose 5-phosphate binding site. His-193 (proton donor) is an active-site residue. Residues Gly-194 and 215 to 216 contribute to the 3-amino-2-oxopropyl phosphate site; that span reads GH.

This sequence belongs to the PNP synthase family. As to quaternary structure, homooctamer; tetramer of dimers.

It is found in the cytoplasm. The enzyme catalyses 3-amino-2-oxopropyl phosphate + 1-deoxy-D-xylulose 5-phosphate = pyridoxine 5'-phosphate + phosphate + 2 H2O + H(+). Its pathway is cofactor biosynthesis; pyridoxine 5'-phosphate biosynthesis; pyridoxine 5'-phosphate from D-erythrose 4-phosphate: step 5/5. Its function is as follows. Catalyzes the complicated ring closure reaction between the two acyclic compounds 1-deoxy-D-xylulose-5-phosphate (DXP) and 3-amino-2-oxopropyl phosphate (1-amino-acetone-3-phosphate or AAP) to form pyridoxine 5'-phosphate (PNP) and inorganic phosphate. The protein is Pyridoxine 5'-phosphate synthase of Colwellia psychrerythraea (strain 34H / ATCC BAA-681) (Vibrio psychroerythus).